Here is a 598-residue protein sequence, read N- to C-terminus: Rho-related protein racA (598 aa).

D11–S17 is a GTP binding site. An Effector region motif is present at residues Y32–Y40. GTP is bound by residues D57 to Q61 and T115 to D118. The interval A175–P210 is disordered. The segment covering G182 to K197 has biased composition (low complexity). BTB domains are found at residues S239–D344 and S405–E472.

It in the N-terminal section; belongs to the small GTPase superfamily. Rho family. In terms of assembly, interacts with pakB.

The sequence is that of Rho-related protein racA (racA) from Dictyostelium discoideum (Social amoeba).